We begin with the raw amino-acid sequence, 530 residues long: Glucose-6-phosphate isomerase (530 aa).

Catalysis depends on glutamate 322, which acts as the Proton donor. Residues histidine 351 and lysine 455 contribute to the active site.

It belongs to the GPI family.

It localises to the cytoplasm. The catalysed reaction is alpha-D-glucose 6-phosphate = beta-D-fructose 6-phosphate. Its pathway is carbohydrate biosynthesis; gluconeogenesis. It participates in carbohydrate degradation; glycolysis; D-glyceraldehyde 3-phosphate and glycerone phosphate from D-glucose: step 2/4. Functionally, catalyzes the reversible isomerization of glucose-6-phosphate to fructose-6-phosphate. This Geobacter sp. (strain M21) protein is Glucose-6-phosphate isomerase.